The chain runs to 166 residues: MIPLRCSSAYSLLIEYCATIRDPCEETYTSRGDHNLSISISLFDQKLEQFHVSLSHATVLVNQSLLPNDACPIQPGILRAISVDAKNLPCVDFPHLCRARGGCLAHHIEYEFVPFAYTERGDTEYMIVVETLGDDADIQFRKFIVMYQRIIAATWKHLCPQTFDCL.

Part of the gene cluster that mediates the biosynthesis of PR-toxin, a bicyclic sesquiterpene belonging to the eremophilane class and acting as a mycotoxin. The first step of the pathway is catalyzed by the aristolochene synthase which performs the cyclization of trans,trans-farnesyl diphosphate (FPP) to the bicyclic sesquiterpene aristolochene. Following the formation of aristolochene, the non-oxygenated aristolochene is converted to the trioxygenated intermediate eremofortin B, via 7-epi-neopetasone. This conversion appears to involve three enzymes, a hydroxysterol oxidase-like enzyme, the quinone-oxidase prx3 that forms the quinone-type-structure in the bicyclic nucleus of aristolochene with the C8-oxo group and the C-3 hydroxyl group, and the P450 monooxygenase prx9 that introduces the epoxide at the double bond between carbons 1 and 2. No monoxy or dioxy-intermediates have been reported to be released to the broth, so these three early oxidative reactions may be coupled together. Eremofortin B is further oxidized by another P450 monooxygenase, that introduces a second epoxide between carbons 7 and 11 prior to acetylation to eremofortin A by the acetyltransferase prx11. The second epoxidation may be performed by a second P450 monooxygenase. After the acetylation step, eremofortin A is converted to eremofortin C and then to PR-toxin. First the conversion of eremofortin A to eremofortin C proceeds by oxidation of the side chain of the molecule at C-12 and is catalyzed by the short-chain oxidoreductase prx1. The cytochrome P450 monooxygenase prx8 also plays a role in this step. The primary alcohol formed at C-12 is finally oxidized by the short-chain alcohol dehydrogenase prx4 that forms PR-toxin. The protein is PR-toxin biosynthesis cluster protein 10 of Penicillium rubens (strain ATCC 28089 / DSM 1075 / NRRL 1951 / Wisconsin 54-1255) (Penicillium chrysogenum).